A 177-amino-acid chain; its full sequence is Probable phospholipid hydroperoxide glutathione peroxidase (177 aa).

The active site involves cysteine 42.

The protein belongs to the glutathione peroxidase family.

The protein resides in the cytoplasm. The catalysed reaction is a hydroperoxy polyunsaturated fatty acid + 2 glutathione = a hydroxy polyunsaturated fatty acid + glutathione disulfide + H2O. Its function is as follows. Protects cells and enzymes from oxidative damage, by catalyzing the reduction of hydrogen peroxide, lipid peroxides and organic hydroperoxide, by glutathione. This chain is Probable phospholipid hydroperoxide glutathione peroxidase, found in Encephalitozoon cuniculi (strain GB-M1) (Microsporidian parasite).